Reading from the N-terminus, the 142-residue chain is Hemoglobin A subunit alpha-2 (142 aa).

The region spanning 2–142 (VLTAGDKANV…VAQNLTSKYR (141 aa)) is the Globin domain. An O2-binding site is contributed by H59. A heme b-binding site is contributed by H88.

Belongs to the globin family. Tetramer of alpha-1, alpha-2 and two identical beta chains. In terms of tissue distribution, red blood cells.

Functionally, involved in oxygen transport from the lung to the various peripheral tissues. In Aldabrachelys gigantea (Aldabra giant tortoise), this protein is Hemoglobin A subunit alpha-2.